Consider the following 607-residue polypeptide: MKWVTFVSLLFLFSSAYFRGVLRRDTHKSEIAHRFNDLGEKHFKGLVLVAFSQYLQQCPFEDHVKLVNEVTEFAKKCAADESAENCDKSLHTLFGDKLCTVATLRATYGELADCCEKQEPERNECFLTHKDDHPNLPKLKPEPDAQCAAFQEDPDKFLGKYLYEVARRHPYFYGPELLFHAEEYKADFTECCPADDKAGCLIPKLDALKERILLSSAKERLKCSSFQKFGERAFKAWSVARLSQKFPKADFAEVSKIVTDLTKVHKECCHGDLLECADDRADLTKYICEHQDSISGKLKACCDKPLLQKSHCIAEVKEDDLPSDLPALAADFAEDKEICKHYKDAKDVFLGTFLYEYSRRHPDYSVSLLLRIAKTYEATLEKCCAEADPPACYATVFDQFTPLVEEPKSLVKKNCDLFEEVGEYDFQNALIVRYTKKAPQVSTPTLVEIGRTLGKVGSRCCKLPESERLPCSENHLALALNRLCVLHEKTPVSEKITKCCTDSLAERRPCFSALELDEGYIPKEFKAETFTFHADICTLPEDEKQIKKQSALAELVKHKPKATKEQLKTVLGNFSAFVAKCCGAEDKEACFAEEGPKLVASSQLALA.

An N-terminal signal peptide occupies residues 1-18 (MKWVTFVSLLFLFSSAYF). Residues 19 to 24 (RGVLRR) constitute a propeptide that is removed on maturation. Albumin domains lie at 19–209 (RGVL…DALK), 210–402 (ERIL…QFTP), and 403–600 (LVEE…KLVA). Histidine 27 lines the Cu cation pocket. A Phosphoserine modification is found at serine 29. 2 residues coordinate Ca(2+): glutamate 30 and aspartate 37. Cysteines 77 and 86 form a disulfide. Phosphoserine occurs at positions 82 and 89. Histidine 91 contributes to the Zn(2+) binding site. Disulfide bonds link cysteine 99–cysteine 115, cysteine 114–cysteine 125, cysteine 147–cysteine 192, cysteine 191–cysteine 200, cysteine 223–cysteine 269, and cysteine 268–cysteine 276. Threonine 107 bears the Phosphothreonine mark. Lysine 228 is subject to N6-succinyllysine. Glutamate 267 serves as a coordination point for Ca(2+). Zn(2+) contacts are provided by histidine 270 and aspartate 272. Ca(2+)-binding residues include aspartate 272, glutamate 275, aspartate 278, and aspartate 282. Disulfide bonds link cysteine 288–cysteine 302, cysteine 301–cysteine 312, cysteine 339–cysteine 384, cysteine 383–cysteine 392, cysteine 415–cysteine 461, cysteine 460–cysteine 471, cysteine 484–cysteine 500, and cysteine 499–cysteine 510. At serine 442 the chain carries Phosphoserine. Phosphothreonine is present on residues threonine 443 and threonine 445. Residue serine 512 is modified to Phosphoserine. 2 disulfide bridges follow: cysteine 537/cysteine 582 and cysteine 581/cysteine 590. N6-methyllysine is present on lysine 557. Residue threonine 569 is modified to Phosphothreonine. Lysine 587 is subject to N6-succinyllysine.

This sequence belongs to the ALB/AFP/VDB family. In terms of assembly, interacts with FCGRT; this interaction regulates ALB homeostasis. Interacts with TASOR. In plasma, occurs in a covalently-linked complex with chromophore-bound alpha-1-microglobulin; this interaction does not prevent fatty acid binding to ALB. Phosphorylated by FAM20C in the extracellular medium. Plasma.

The protein localises to the secreted. Its function is as follows. Binds water, Ca(2+), Na(+), K(+), fatty acids, hormones, bilirubin and drugs. Its main function is the regulation of the colloidal osmotic pressure of blood. Major zinc transporter in plasma, typically binds about 80% of all plasma zinc. Major calcium and magnesium transporter in plasma, binds approximately 45% of circulating calcium and magnesium in plasma. Potentially has more than two calcium-binding sites and might additionally bind calcium in a non-specific manner. The shared binding site between zinc and calcium at residue Asp-272 suggests a crosstalk between zinc and calcium transport in the blood. The rank order of affinity is zinc &gt; calcium &gt; magnesium. Binds to the bacterial siderophore enterobactin and inhibits enterobactin-mediated iron uptake of E.coli from ferric transferrin, and may thereby limit the utilization of iron and growth of enteric bacteria such as E.coli. Does not prevent iron uptake by the bacterial siderophore aerobactin. In Equus asinus (Donkey), this protein is Albumin (ALB).